The following is a 319-amino-acid chain: Ribosomal protein uL3 glutamine methyltransferase (319 aa).

This sequence belongs to the protein N5-glutamine methyltransferase family. PrmB subfamily.

It carries out the reaction L-glutaminyl-[ribosomal protein uL3] + S-adenosyl-L-methionine = N(5)-methyl-L-glutaminyl-[ribosomal protein uL3] + S-adenosyl-L-homocysteine + H(+). In terms of biological role, methylates large ribosomal subunit protein uL3 on a specific glutamine residue. This Bradyrhizobium diazoefficiens (strain JCM 10833 / BCRC 13528 / IAM 13628 / NBRC 14792 / USDA 110) protein is Ribosomal protein uL3 glutamine methyltransferase.